Consider the following 361-residue polypeptide: 3-dehydroquinate synthase (361 aa).

Residues 106–110, 130–131, Lys143, and Lys152 each bind NAD(+); these read GVVGD and TT. The Zn(2+) site is built by Glu185, His247, and His264.

Belongs to the sugar phosphate cyclases superfamily. Dehydroquinate synthase family. The cofactor is NAD(+). Co(2+) serves as cofactor. Requires Zn(2+) as cofactor.

The protein localises to the cytoplasm. It carries out the reaction 7-phospho-2-dehydro-3-deoxy-D-arabino-heptonate = 3-dehydroquinate + phosphate. It functions in the pathway metabolic intermediate biosynthesis; chorismate biosynthesis; chorismate from D-erythrose 4-phosphate and phosphoenolpyruvate: step 2/7. In terms of biological role, catalyzes the conversion of 3-deoxy-D-arabino-heptulosonate 7-phosphate (DAHP) to dehydroquinate (DHQ). The protein is 3-dehydroquinate synthase of Gloeobacter violaceus (strain ATCC 29082 / PCC 7421).